The primary structure comprises 427 residues: Glutamate-1-semialdehyde 2,1-aminomutase (427 aa).

Lys265 is subject to N6-(pyridoxal phosphate)lysine.

Belongs to the class-III pyridoxal-phosphate-dependent aminotransferase family. HemL subfamily. Homodimer. Requires pyridoxal 5'-phosphate as cofactor.

It localises to the cytoplasm. The enzyme catalyses (S)-4-amino-5-oxopentanoate = 5-aminolevulinate. The protein operates within porphyrin-containing compound metabolism; protoporphyrin-IX biosynthesis; 5-aminolevulinate from L-glutamyl-tRNA(Glu): step 2/2. The chain is Glutamate-1-semialdehyde 2,1-aminomutase from Edwardsiella ictaluri (strain 93-146).